A 295-amino-acid chain; its full sequence is Ribosomal RNA small subunit methyltransferase A (295 aa).

S-adenosyl-L-methionine contacts are provided by N29, L31, G56, E77, D102, and N127.

Belongs to the class I-like SAM-binding methyltransferase superfamily. rRNA adenine N(6)-methyltransferase family. RsmA subfamily.

The protein localises to the cytoplasm. The catalysed reaction is adenosine(1518)/adenosine(1519) in 16S rRNA + 4 S-adenosyl-L-methionine = N(6)-dimethyladenosine(1518)/N(6)-dimethyladenosine(1519) in 16S rRNA + 4 S-adenosyl-L-homocysteine + 4 H(+). Its function is as follows. Specifically dimethylates two adjacent adenosines (A1518 and A1519) in the loop of a conserved hairpin near the 3'-end of 16S rRNA in the 30S particle. May play a critical role in biogenesis of 30S subunits. The sequence is that of Ribosomal RNA small subunit methyltransferase A from Anoxybacillus flavithermus (strain DSM 21510 / WK1).